Consider the following 185-residue polypeptide: Ribosome-recycling factor (185 aa).

This sequence belongs to the RRF family.

The protein localises to the cytoplasm. Functionally, responsible for the release of ribosomes from messenger RNA at the termination of protein biosynthesis. May increase the efficiency of translation by recycling ribosomes from one round of translation to another. In Xanthomonas oryzae pv. oryzae (strain MAFF 311018), this protein is Ribosome-recycling factor.